Reading from the N-terminus, the 195-residue chain is Small ribosomal subunit protein eS7 (195 aa).

2 positions are modified to phosphothreonine: T146 and T151. Residues S172 and S173 each carry the phosphoserine modification.

The protein belongs to the eukaryotic ribosomal protein eS7 family. In terms of assembly, component of the small ribosomal subunit (SSU). Mature yeast ribosomes consist of a small (40S) and a large (60S) subunit. The 40S small subunit contains 1 molecule of ribosomal RNA (18S rRNA) and at least 33 different proteins. The large 60S subunit contains 3 rRNA molecules (25S, 5.8S and 5S rRNA) and at least 46 different proteins. Interacts with snoRNA U3. uS11 interacts with MPP10. Component of the ribosomal small subunit (SSU) processome composed of at least 40 protein subunits and snoRNA U3.

The protein localises to the cytoplasm. It is found in the nucleus. The protein resides in the nucleolus. Functionally, component of the ribosome, a large ribonucleoprotein complex responsible for the synthesis of proteins in the cell. The small ribosomal subunit (SSU) binds messenger RNAs (mRNAs) and translates the encoded message by selecting cognate aminoacyl-transfer RNA (tRNA) molecules. The large subunit (LSU) contains the ribosomal catalytic site termed the peptidyl transferase center (PTC), which catalyzes the formation of peptide bonds, thereby polymerizing the amino acids delivered by tRNAs into a polypeptide chain. The nascent polypeptides leave the ribosome through a tunnel in the LSU and interact with protein factors that function in enzymatic processing, targeting, and the membrane insertion of nascent chains at the exit of the ribosomal tunnel. eS7 is involved in nucleolar processing of pre-18S ribosomal RNA and ribosome assembly. The sequence is that of Small ribosomal subunit protein eS7 (rps7) from Schizosaccharomyces pombe (strain 972 / ATCC 24843) (Fission yeast).